We begin with the raw amino-acid sequence, 697 residues long: Envelope glycoprotein G (697 aa).

A signal peptide spans 1–22 (MHAIAPRLLLLFVLSGLPGTRG). The Virion surface segment spans residues 23 to 648 (GSGVPGPINP…WFLTASPALD (626 aa)). 2 N-linked (GlcNAc...) asparagine; by host glycosylation sites follow: Asn-104 and Asn-163. Disordered stretches follow at residues 298–389 (HWAP…TTPP) and 402–630 (TPEE…PSGP). Residues 322–335 (LRTDPEGVDPDVRA) show a composition bias toward basic and acidic residues. Composition is skewed to low complexity over residues 375 to 389 (DPSA…TTPP) and 402 to 445 (TPEE…AKTP). N-linked (GlcNAc...) asparagine; by host glycosylation is present at Asn-435. Composition is skewed to pro residues over residues 446-457 (PTTPAPTTPPPT) and 465-480 (PTTP…PATP). Low complexity predominate over residues 481–529 (GPVGASAAPTADSPLTALPPATAPGPSAANVSVAATTATPGTRGTARTP). Residue Asn-510 is glycosylated (N-linked (GlcNAc...) asparagine; by host). The span at 542–552 (DAPPGSPAPPP) shows a compositional bias: pro residues. Residues 560-576 (EEFEGAGDGEPPEDDDS) are compositionally biased toward acidic residues. Residues 587-603 (PNKPPPARPGPIRPTLP) are compositionally biased toward pro residues. Residues 649–669 (ILFIISTTIHTAAFVCLVALA) form a helical membrane-spanning segment. Residues 670–697 (AQLWRGRAGRRRYAHPSVRYVCLPPERD) are Intravirion-facing.

It belongs to the alphaherpesvirinae glycoprotein G family.

It localises to the virion membrane. In terms of biological role, chemokine-binding protein that inhibits neutrophils' chemotaxis. The chain is Envelope glycoprotein G (gG) from Homo sapiens (Human).